Consider the following 318-residue polypeptide: Chlorophyllase-2 (318 aa).

The GXSXG motif lies at 136 to 140 (GHSRG). The active-site Nucleophile is the Ser-138. Residues Asp-167 and His-244 each act as charge relay system in the active site.

This sequence belongs to the AB hydrolase superfamily. Lipase family. Expressed in leaves, flowers and flower buds, but not in roots.

It is found in the cytoplasm. It localises to the cytosol. The catalysed reaction is a chlorophyll + H2O = a chlorophyllide + phytol + H(+). The enzyme catalyses chlorophyll a + H2O = phytol + chlorophyllide a + H(+). It functions in the pathway porphyrin-containing compound metabolism; chlorophyll degradation. Functionally, catalyzes the hydrolysis of ester bond in chlorophyll to yield chlorophyllide and phytol. Does not seem to be required for chlorophyll degradation during senescence. This chain is Chlorophyllase-2, found in Arabidopsis thaliana (Mouse-ear cress).